We begin with the raw amino-acid sequence, 137 residues long: Seminal plasma sperm motility inhibitor (137 aa).

Residues 1 to 21 (MKLGSAIPWALLLSTXTLVST) form the signal peptide. Cysteines 30 and 51 form a disulfide. Residues 30 to 131 (CGGFLKNYSG…SSFNVYFYGI (102 aa)) enclose the CUB domain. N-linked (GlcNAc...) asparagine glycosylation is present at N36.

Belongs to the spermadhesin family. Seminal plasma or sperm.

The protein localises to the secreted. Functionally, inhibitor of sperm motility. This chain is Seminal plasma sperm motility inhibitor (SPMI), found in Sus scrofa (Pig).